The chain runs to 342 residues: Phosphate acyltransferase (342 aa).

This sequence belongs to the PlsX family. As to quaternary structure, homodimer. Probably interacts with PlsY.

Its subcellular location is the cytoplasm. It carries out the reaction a fatty acyl-[ACP] + phosphate = an acyl phosphate + holo-[ACP]. The protein operates within lipid metabolism; phospholipid metabolism. Catalyzes the reversible formation of acyl-phosphate (acyl-PO(4)) from acyl-[acyl-carrier-protein] (acyl-ACP). This enzyme utilizes acyl-ACP as fatty acyl donor, but not acyl-CoA. In Shewanella loihica (strain ATCC BAA-1088 / PV-4), this protein is Phosphate acyltransferase.